We begin with the raw amino-acid sequence, 363 residues long: MLIDPRDSLLSSYDYELPEACIAQRPLEPRHAARLLMVEPEAGCRDRQVWDLLEELEPGDLLVVNDTRVLRARLQVRRAGGGLGELLVLQPQGQGQWLCLARPAKRLRPGDSIALVADGEPDLPLQVLAVEESSGGRLIQFPPECVDAASLEPLLLRYGVMPLPPYIHQQDESDNARYQTCFASKPGAVAAPTAGLHLSEELLAALTQKGIERASVTLHVGLGTFRPVETEDLSQLELHSEWVEVSEALVQAVAACRKRGGRVIAVGTTSVRSLEGVAALHGGVLQPFRGPVNLVIQPGFRFAVVQGLLTNFHLPKSSLLLLVSALIGRERLLQLYQHAITAGYRFYSYGDAMWIPPECSRQP.

It belongs to the QueA family. In terms of assembly, monomer.

The protein localises to the cytoplasm. It carries out the reaction 7-aminomethyl-7-carbaguanosine(34) in tRNA + S-adenosyl-L-methionine = epoxyqueuosine(34) in tRNA + adenine + L-methionine + 2 H(+). The protein operates within tRNA modification; tRNA-queuosine biosynthesis. In terms of biological role, transfers and isomerizes the ribose moiety from AdoMet to the 7-aminomethyl group of 7-deazaguanine (preQ1-tRNA) to give epoxyqueuosine (oQ-tRNA). The sequence is that of S-adenosylmethionine:tRNA ribosyltransferase-isomerase from Synechococcus sp. (strain RCC307).